The following is a 226-amino-acid chain: V-type proton ATPase subunit E (226 aa).

Belongs to the V-ATPase E subunit family. V-ATPase is a heteromultimeric enzyme made up of two complexes: the ATP-hydrolytic V1 complex and the proton translocation V0 complex. The V1 complex consists of three catalytic AB heterodimers that form a heterohexamer, three peripheral stalks each consisting of EG heterodimers, one central rotor including subunits D and F, and the regulatory subunits C and H. The proton translocation complex V0 consists of the proton transport subunit a, a ring of proteolipid subunits c9c'', rotary subunit d, subunits e and f, and the accessory subunits VhaAC45 and ATP6AP2.

Subunit of the V1 complex of vacuolar(H+)-ATPase (V-ATPase), a multisubunit enzyme composed of a peripheral complex (V1) that hydrolyzes ATP and a membrane integral complex (V0) that translocates protons. V-ATPase is responsible for acidifying and maintaining the pH of intracellular compartments and in some cell types, is targeted to the plasma membrane, where it is responsible for acidifying the extracellular environment. The protein is V-type proton ATPase subunit E (VHA26) of Manduca sexta (Tobacco hawkmoth).